Here is a 387-residue protein sequence, read N- to C-terminus: 3-ketoacyl-CoA thiolase FadA (387 aa).

Cys91 acts as the Acyl-thioester intermediate in catalysis. Active-site proton acceptor residues include His343 and Cys373.

Belongs to the thiolase-like superfamily. Thiolase family. Heterotetramer of two alpha chains (FadB) and two beta chains (FadA).

Its subcellular location is the cytoplasm. The enzyme catalyses an acyl-CoA + acetyl-CoA = a 3-oxoacyl-CoA + CoA. Its pathway is lipid metabolism; fatty acid beta-oxidation. Functionally, catalyzes the final step of fatty acid oxidation in which acetyl-CoA is released and the CoA ester of a fatty acid two carbons shorter is formed. Involved in the aerobic and anaerobic degradation of long-chain fatty acids. This chain is 3-ketoacyl-CoA thiolase FadA (fadA), found in Escherichia coli (strain K12).